Consider the following 260-residue polypeptide: RNA polymerase sigma-G factor (260 aa).

A recognizes anti-sigma-G factor Gin (csfB) region spans residues 1–71; sequence MSRNKVEICG…GEYVDDLFQV (71 aa). Positions 67 to 80 match the Polymerase core binding motif; the sequence is DLFQVGCIGLMKSI. The segment at residues 229–248 is a DNA-binding region (H-T-H motif); the sequence is QMEVAEEIGISQAQVSRLEK.

The protein belongs to the sigma-70 factor family. Interacts with anti-sigma-G factor Gin (csfB).

Activity repressed by anti-sigma-G factor Gin (csfB) and Lon protease during the early stages of forespore development. When both Gin and sigma-G are expressed in E.coli Gin inhibits sigma-G activity, strongly suggesting Gin inhibits by direct physical interaction. Its function is as follows. Sigma factors are initiation factors that promote the attachment of RNA polymerase to specific initiation sites and are then released. This sigma factor is responsible for the expression of sporulation specific genes in the forespore. The polypeptide is RNA polymerase sigma-G factor (sigG) (Bacillus subtilis (strain 168)).